Here is a 748-residue protein sequence, read N- to C-terminus: Transducin-like enhancer protein 4 (748 aa).

Disordered regions lie at residues 1–20 (MIRD…PHQP) and 157–332 (LPIK…DPLA). The q domain stretch occupies residues 1–112 (MIRDLSKMYR…SQEQQQLQAQ (112 aa)). Residues 113–179 (HLLTWTWSAC…HQRDRDSIKS (67 aa)) form a GP domain region. The span at 158 to 177 (PIKDEKKHHDNDHQRDRDSI) shows a compositional bias: basic and acidic residues. A compositionally biased stretch (low complexity) spans 178–189 (KSSSVSPSASFR). Residues 180-249 (SSVSPSASFR…SPRGSPAHSP (70 aa)) form a ccN domain region. Phosphoserine is present on residues Ser183, Ser187, Ser191, and Ser197. A compositionally biased stretch (basic and acidic residues) spans 190-227 (GSEKHRNSTDYSSESKKQKTEEKEIAARYDSDGEKSDD). Residue Lys212 is modified to N6-acetyllysine. Residue Ser220 is modified to Phosphoserine. Ser225 carries the phosphoserine; by CK2 modification. Ser240 carries the phosphoserine; by CDK1 modification. Phosphoserine occurs at positions 244 and 248. Over residues 248 to 264 (SPRENGLDKTRLLKKDA) the composition is skewed to basic and acidic residues. Positions 250–427 (RENGLDKTRL…PGGKPAYSFH (178 aa)) are SP domain. Lys256 bears the N6-acetyllysine mark. Low complexity predominate over residues 265–280 (PISPASVASSSSTPSS). Ser267 carries the phosphoserine modification. Polar residues predominate over residues 292-303 (TTPVSKSNTPTP). Thr293 carries the post-translational modification Phosphothreonine. Phosphoserine is present on residues Ser296 and Ser298. A phosphothreonine mark is found at Thr300, Thr302, Thr309, and Thr315. Phosphoserine is present on Ser394. WD repeat units follow at residues 460 to 498 (NHGE…NKSP), 506 to 545 (NRDN…PRIK), 550 to 589 (SSAP…LVRQ), 592 to 631 (GHTD…QLQQ), 633 to 672 (DFTS…KYQL), 674 to 713 (LHES…SIFQ), and 715 to 748 (KESS…EVIY).

It belongs to the WD repeat Groucho/TLE family. Homooligomer and heterooligomer with other family members. Binds PAX5, LEF1, TCF7, TCF7L1 and TCF7L2. Interacts with ZNF703; TLE4 may mediate ZNF703 transcriptional repression. Interacts with SIX3 and SIX6. Interacts with PAX2. In terms of processing, phosphorylated. PAX5 binding increases phosphorylation. Post-translationally, ubiquitinated by XIAP/BIRC4.

The protein localises to the nucleus. Transcriptional corepressor that binds to a number of transcription factors. Inhibits the transcriptional activation mediated by PAX5, and by CTNNB1 and TCF family members in Wnt signaling. The effects of full-length TLE family members may be modulated by association with dominant-negative AES. Essential for the transcriptional repressor activity of SIX3 during retina and lens development and for SIX3 transcriptional auto-repression. Involved in transcriptional repression of GNRHR and enhances MSX1-mediated transcriptional repression of CGA/alpha-GSU. The sequence is that of Transducin-like enhancer protein 4 (Tle4) from Rattus norvegicus (Rat).